A 404-amino-acid chain; its full sequence is Zinc transporter 10 (404 aa).

An N-terminal signal peptide occupies residues 1–22 (MESSSSSSYIPFIRQIAASVSA). Topologically, residues 23-49 (ASCDAVVGGGGDKDEECRDEAAALRLK) are extracellular. The helical transmembrane segment at 50–70 (MVAVAAILIAGAAGVAIPLVG) threads the bilayer. The Cytoplasmic segment spans residues 71-86 (RRRRGGGGGGGGGASS). Residues 87–107 (GGLFVLAKAFAAGVILATGFV) form a helical membrane-spanning segment. Residues 108–129 (HMLHDAEHALSNPCLPHSPWRR) are Extracellular-facing. The chain crosses the membrane as a helical span at residues 130–150 (FPFPGFVAMLAALATLVVDFV). Residues 151–248 (GTHFYERKHR…GHEEGPSARH (98 aa)) are Cytoplasmic-facing. Residues 249 to 269 (VVVSQILELGIVSHSVIIGLS) traverse the membrane as a helical segment. Residues 270-280 (LGVSQSPCTIK) are Extracellular-facing. The helical transmembrane segment at 281 to 301 (PLVAALSFHQFFEGFALGGCI) threads the bilayer. Residues 302-311 (SEAQLKNFSA) are Cytoplasmic-facing. Residues 312-332 (FLMAFFFAITTPAGITVGAAV) traverse the membrane as a helical segment. Topologically, residues 333-343 (ASFYNPNSPRA) are extracellular. Residues 344 to 364 (LVVEGILDSMSAGILIYMALV) traverse the membrane as a helical segment. At 365–383 (DLIAADFLSRKMSCNPRLQ) the chain is on the cytoplasmic side. The chain crosses the membrane as a helical span at residues 384–404 (VGSYIALFLGAMAMAALALWA).

The protein belongs to the ZIP transporter (TC 2.A.5) family.

The protein localises to the cell membrane. Zinc transporter that may be involved in zinc uptake from the rhizosphere. This is Zinc transporter 10 (ZIP10) from Oryza sativa subsp. japonica (Rice).